Here is a 317-residue protein sequence, read N- to C-terminus: MGLQELDPLAQLSLPPGFRFYPTDEELMVEYLCRKAAGHDFSLQLIAEIDLYKFDPWVLPSKALFGEKEWYFFSPRDRKYPNGSRPNRVAGSGYWKATGTDKVISTEGRRVGIKKALVFYIGKAPKGTKTNWIMHEYRLIEPSRRNGSTKLDDWVLCRIYKKQTSAQKQAYNNLMTSGREYSNNGSSTSSSSHQYDDVLESLHEIDNRSLGFAAGSSNALPHSHRPVLTNHKTGFQGLAREPSFDWANLIGQNSVPELGLSHNVPSIRYGDGGTQQQTEGIPRFNNNSDVSANQGFSVDPVNGFGYSGQQSSGFGFI.

The NAC domain maps to 14 to 162 (LPPGFRFYPT…DWVLCRIYKK (149 aa)). The DNA-binding element occupies 111–168 (VGIKKALVFYIGKAPKGTKTNWIMHEYRLIEPSRRNGSTKLDDWVLCRIYKKQTSAQK).

Expressed in leaves.

The protein localises to the nucleus. Functionally, transcription factors that bind specifically to the 5'-CATGTG-3' motif. The protein is NAC domain-containing protein 55 (NAC055) of Arabidopsis thaliana (Mouse-ear cress).